The primary structure comprises 64 residues: Alpha-conotoxin-like Ac1.1b (64 aa).

An N-terminal signal peptide occupies residues M1–S21. The propeptide occupies F22–R47. The disordered stretch occupies residues P23–K46. The segment covering S28–K44 has biased composition (basic and acidic residues). Cystine bridges form between C51-C56 and C52-C62. C62 is modified (cysteine amide).

Belongs to the conotoxin A superfamily. In terms of tissue distribution, expressed by the venom duct.

The protein resides in the secreted. Alpha-conotoxins act on postsynaptic membranes, they bind to the nicotinic acetylcholine receptors (nAChR) and thus inhibit them. The chain is Alpha-conotoxin-like Ac1.1b from Conus achatinus (Little frog cone).